Consider the following 445-residue polypeptide: Probable histidine--tRNA ligase, cytoplasmic (445 aa).

This sequence belongs to the class-II aminoacyl-tRNA synthetase family.

It is found in the cytoplasm. The catalysed reaction is tRNA(His) + L-histidine + ATP = L-histidyl-tRNA(His) + AMP + diphosphate + H(+). The sequence is that of Probable histidine--tRNA ligase, cytoplasmic from Antonospora locustae (Microsporidian parasite).